The chain runs to 375 residues: Chaperone protein DnaJ (375 aa).

Positions 5-70 (DYYEVLGVSR…QKRAAYDQFG (66 aa)) constitute a J domain. The CR-type zinc-finger motif lies at 131 to 209 (GTTVKIRVPS…CHGSGYVEEQ (79 aa)). Positions 144, 147, 161, 164, 183, 186, 197, and 200 each coordinate Zn(2+). CXXCXGXG motif repeat units follow at residues 144 to 151 (CKSCSGSG), 161 to 168 (CGTCNGAG), 183 to 190 (CPRCRGAG), and 197 to 204 (CRSCHGSG).

Belongs to the DnaJ family. Homodimer. Zn(2+) is required as a cofactor.

Its subcellular location is the cytoplasm. In terms of biological role, participates actively in the response to hyperosmotic and heat shock by preventing the aggregation of stress-denatured proteins and by disaggregating proteins, also in an autonomous, DnaK-independent fashion. Unfolded proteins bind initially to DnaJ; upon interaction with the DnaJ-bound protein, DnaK hydrolyzes its bound ATP, resulting in the formation of a stable complex. GrpE releases ADP from DnaK; ATP binding to DnaK triggers the release of the substrate protein, thus completing the reaction cycle. Several rounds of ATP-dependent interactions between DnaJ, DnaK and GrpE are required for fully efficient folding. Also involved, together with DnaK and GrpE, in the DNA replication of plasmids through activation of initiation proteins. The protein is Chaperone protein DnaJ of Hahella chejuensis (strain KCTC 2396).